A 234-amino-acid chain; its full sequence is MKTVVLSLGGSILIPELAKNRISAYLPVLKEIAGQHRVFVVVGGGGGARDYIAVARKLGIDEGTSDEIGILVTRLNATLLIAALGDAAYPKVAESHSEAKKFGESKKIVVMGGITPGQTTDAVAAVLAERVQADVFVNVTSVNGIYDKDPKSHPAAQHHATLTPKQLLSIVSQGGLGAGSHNVLDIIAARIVERSSIPLVVLDGTRPKNLSDVLLRGKGEYSVVSSTKKKVLPL.

Residue 10–11 participates in ATP binding; sequence GS. Residue glycine 44 coordinates UMP. ATP-binding residues include glycine 45 and arginine 49. Residues aspartate 66 and 114–120 each bind UMP; that span reads ITPGQTT. ATP-binding residues include threonine 140, tyrosine 146, and aspartate 149.

It belongs to the UMP kinase family. As to quaternary structure, homohexamer.

It localises to the cytoplasm. It catalyses the reaction UMP + ATP = UDP + ADP. Its pathway is pyrimidine metabolism; CTP biosynthesis via de novo pathway; UDP from UMP (UMPK route): step 1/1. With respect to regulation, inhibited by UTP. Functionally, catalyzes the reversible phosphorylation of UMP to UDP. This is Uridylate kinase from Methanoregula boonei (strain DSM 21154 / JCM 14090 / 6A8).